Here is a 244-residue protein sequence, read N- to C-terminus: Ribonuclease P protein component 3 (244 aa).

The protein belongs to the eukaryotic/archaeal RNase P protein component 3 family. Consists of a catalytic RNA component and at least 4-5 protein subunits.

Its subcellular location is the cytoplasm. It carries out the reaction Endonucleolytic cleavage of RNA, removing 5'-extranucleotides from tRNA precursor.. In terms of biological role, part of ribonuclease P, a protein complex that generates mature tRNA molecules by cleaving their 5'-ends. The sequence is that of Ribonuclease P protein component 3 from Methanopyrus kandleri (strain AV19 / DSM 6324 / JCM 9639 / NBRC 100938).